We begin with the raw amino-acid sequence, 467 residues long: Uronate isomerase (467 aa).

Belongs to the metallo-dependent hydrolases superfamily. Uronate isomerase family.

It catalyses the reaction D-glucuronate = D-fructuronate. The enzyme catalyses aldehydo-D-galacturonate = keto-D-tagaturonate. It functions in the pathway carbohydrate metabolism; pentose and glucuronate interconversion. The polypeptide is Uronate isomerase (Flavobacterium johnsoniae (strain ATCC 17061 / DSM 2064 / JCM 8514 / BCRC 14874 / CCUG 350202 / NBRC 14942 / NCIMB 11054 / UW101) (Cytophaga johnsonae)).